A 108-amino-acid chain; its full sequence is MILRSLLYFVMAGLCEIGGGYLVWLWIREGKSVWLALVRAILLTVYGFVATLQPANFGRAYAAYGGIFIILSIIWGWQVDNVVVDRLDWLGAAIALVGVLVMMYANRA.

Transmembrane regions (helical) follow at residues 7 to 27 (LYFV…WLWI), 32 to 52 (SVWL…VATL), 64 to 84 (YGGI…NVVV), and 86 to 106 (RLDW…MYAN).

The protein belongs to the UPF0060 family.

The protein localises to the cell inner membrane. In Synechocystis sp. (strain ATCC 27184 / PCC 6803 / Kazusa), this protein is UPF0060 membrane protein sll0793.